The primary structure comprises 201 residues: Two-component response regulator ORR9 (201 aa).

In terms of domain architecture, Response regulatory spans 10 to 142 (HVLAVDDSLP…DMSKLKPHIL (133 aa)). The residue at position 75 (D75) is a 4-aspartylphosphate. Positions 149–201 (HYQQEQNLQSNSESNNSSNPTSENSSSSTSSNSHKRKAVDEEILPHTIRPRHS) are disordered. Residues 158-180 (SNSESNNSSNPTSENSSSSTSSN) show a composition bias toward low complexity.

The protein belongs to the ARR family. Type-A subfamily. In terms of processing, two-component system major event consists of a His-to-Asp phosphorelay between a sensor histidine kinase (HK) and a response regulator (RR). In plants, the His-to-Asp phosphorelay involves an additional intermediate named Histidine-containing phosphotransfer protein (HPt). This multistep phosphorelay consists of a His-Asp-His-Asp sequential transfer of a phosphate group between first a His and an Asp of the HK protein, followed by the transfer to a conserved His of the HPt protein and finally the transfer to an Asp in the receiver domain of the RR protein.

Functions as a response regulator involved in His-to-Asp phosphorelay signal transduction system. Phosphorylation of the Asp residue in the receiver domain activates the ability of the protein to promote the transcription of target genes. Type-A response regulators seem to act as negative regulators of the cytokinin signaling. This is Two-component response regulator ORR9 from Oryza sativa subsp. japonica (Rice).